The sequence spans 322 residues: Helix-loop-helix 34 (322 aa).

Over residues 1 to 11 (METNLSEEKQK) the composition is skewed to basic and acidic residues. A disordered region spans residues 1 to 23 (METNLSEEKQKPSKSQAQQRRQM). In terms of domain architecture, bHLH spans 8–62 (EKQKPSKSQAQQRRQMENYEFSQLANELPLARAISGQHIDKTTMVRLATAYIKLH). PAS domains follow at residues 82–152 (DSLW…DLNW) and 203–276 (PTPV…FNLG).

As to quaternary structure, efficient DNA binding requires dimerization with another bHLH protein. In terms of tissue distribution, expressed in a small subset of neurons, probably AVJL and AVJR. Expressed in the AVH neurons.

It localises to the nucleus. In terms of biological role, transcription factor. Involved in specifying AVH neuron identity, acting in concert with unc-42. Involved in serotonin-mediated feeding behavior, probably acting by modulating expression of genes involved in glutamate signaling. This Caenorhabditis elegans protein is Helix-loop-helix 34 (hlh-34).